The following is a 375-amino-acid chain: Growth/differentiation factor 8 (375 aa).

The first 18 residues, 1 to 18 (MQKLQISVYIYLFMLIVA), serve as a signal peptide directing secretion. Positions 19-266 (GPVDLNENSE…VTDTPKRSRR (248 aa)) are excised as a propeptide. N71 is a glycosylation site (N-linked (GlcNAc...) asparagine). 4 disulfide bridges follow: C272-C282, C281-C340, C309-C372, and C313-C374.

The protein belongs to the TGF-beta family. In terms of assembly, homodimer; disulfide-linked. Interacts with WFIKKN2, leading to inhibit its activity. Interacts with FSTL3. In terms of processing, synthesized as large precursor molecule that undergoes proteolytic cleavage to generate an N-terminal propeptide and a disulfide linked C-terminal dimer, which is the biologically active molecule. The circulating form consists of a latent complex of the C-terminal dimer and other proteins, including its propeptide, which maintain the C-terminal dimer in a latent, inactive state. Ligand activation requires additional cleavage of the prodomain by a tolloid-like metalloproteinase.

It is found in the secreted. Acts specifically as a negative regulator of skeletal muscle growth. The polypeptide is Growth/differentiation factor 8 (MSTN) (Lepus capensis (Brown hare)).